Consider the following 342-residue polypeptide: UDP-3-O-acylglucosamine N-acyltransferase (342 aa).

The active-site Proton acceptor is histidine 238.

Belongs to the transferase hexapeptide repeat family. LpxD subfamily. In terms of assembly, homotrimer.

It carries out the reaction a UDP-3-O-[(3R)-3-hydroxyacyl]-alpha-D-glucosamine + a (3R)-hydroxyacyl-[ACP] = a UDP-2-N,3-O-bis[(3R)-3-hydroxyacyl]-alpha-D-glucosamine + holo-[ACP] + H(+). The protein operates within bacterial outer membrane biogenesis; LPS lipid A biosynthesis. Functionally, catalyzes the N-acylation of UDP-3-O-acylglucosamine using 3-hydroxyacyl-ACP as the acyl donor. Is involved in the biosynthesis of lipid A, a phosphorylated glycolipid that anchors the lipopolysaccharide to the outer membrane of the cell. In Tolumonas auensis (strain DSM 9187 / NBRC 110442 / TA 4), this protein is UDP-3-O-acylglucosamine N-acyltransferase.